A 39-amino-acid polypeptide reads, in one-letter code: Beta-theraphotoxin-Cm2a (39 aa).

Disulfide bonds link Cys-7/Cys-21, Cys-14/Cys-26, and Cys-20/Cys-33. Residue Phe-39 is modified to Phenylalanine amide.

As to expression, expressed by the venom gland.

It is found in the secreted. Its function is as follows. Inhibits mammalian voltage-gated sodium channel subtypes Nav1.5/SCN5A and Nav1.8/SCN10A by shifting the voltage dependence of channel activation to more depolarized potentials and by blocking the inward component of the sodium current. In vivo, this toxin causes erect, elevated tail, initial partial ataxia, followed by recovery over approximately 1 hour after injection and the progressive development of shaking. Although paralysis subsides, the body tremors never cease and persist until the end of the experiment. The chain is Beta-theraphotoxin-Cm2a from Ceratogyrus marshalli (Straighthorned baboon tarantula).